The primary structure comprises 64 residues: Large ribosomal subunit protein bL35 (64 aa).

The interval 1–31 is disordered; it reads MPKMKTHSGAKKRFKLTGTGKLKRQQANRRH.

Belongs to the bacterial ribosomal protein bL35 family.

This Paenarthrobacter aurescens (strain TC1) protein is Large ribosomal subunit protein bL35.